Here is a 1034-residue protein sequence, read N- to C-terminus: Protein ITPRID1 (1034 aa).

Disordered regions lie at residues 223–290 (KTQQ…PTKP), 442–486 (QVSS…KSMT), and 624–678 (QSSL…SSWS). Polar residues-rich tracts occupy residues 443–453 (VSSMTGSQSPT) and 465–476 (HSPASQQDSLQE). Over residues 477-486 (SYGSKSKSMT) the composition is skewed to low complexity. The span at 669-678 (TDSNAASSWS) shows a compositional bias: polar residues. Residues 843-902 (EMETMKMVCQSFREHLEEIEQHFMGQQALYPRDMSEEEREEAEYLRTLREALRQQVAELA) are a coiled coil.

This chain is Protein ITPRID1 (Itprid1), found in Mus musculus (Mouse).